The chain runs to 225 residues: Class E basic helix-loop-helix protein 23 (225 aa).

The disordered stretch occupies residues 35 to 104 (EAARGYGTPG…PREQRSLRLS (70 aa)). The region spanning 100–154 (SLRLSINARERRRMHDLNDALDGLRAVIPYAHSPSVRKLSKIATLLLAKNYILMQ) is the bHLH domain.

It localises to the nucleus. May function as transcriptional repressor. May modulate the expression of genes required for the differentiation and/or maintenance of pancreatic and neuronal cell types. May be important for rod bipolar cell maturation. The chain is Class E basic helix-loop-helix protein 23 (BHLHE23) from Homo sapiens (Human).